Here is a 313-residue protein sequence, read N- to C-terminus: Protein FixB (313 aa).

Position 255 to 283 (255 to 283 (LYLAVGISGQIQHMVGANASQTIFAINKD)) interacts with FAD.

Belongs to the ETF alpha-subunit/FixB family. As to quaternary structure, heterodimer of FixA and FixB.

Its pathway is amine and polyamine metabolism; carnitine metabolism. Its function is as follows. Required for anaerobic carnitine reduction. May bring reductant to CaiA. The polypeptide is Protein FixB (Escherichia coli (strain K12 / MC4100 / BW2952)).